Reading from the N-terminus, the 121-residue chain is Large ribosomal subunit protein eL31 (121 aa).

It belongs to the eukaryotic ribosomal protein eL31 family.

The protein is Large ribosomal subunit protein eL31 (RPL31) of Panax ginseng (Korean ginseng).